The following is a 289-amino-acid chain: Ribosomal RNA small subunit methyltransferase A (289 aa).

Residues His-27, Leu-29, Gly-54, Glu-76, Asp-102, and Asn-123 each contribute to the S-adenosyl-L-methionine site.

Belongs to the class I-like SAM-binding methyltransferase superfamily. rRNA adenine N(6)-methyltransferase family. RsmA subfamily.

The protein resides in the cytoplasm. The catalysed reaction is adenosine(1518)/adenosine(1519) in 16S rRNA + 4 S-adenosyl-L-methionine = N(6)-dimethyladenosine(1518)/N(6)-dimethyladenosine(1519) in 16S rRNA + 4 S-adenosyl-L-homocysteine + 4 H(+). Functionally, specifically dimethylates two adjacent adenosines (A1518 and A1519) in the loop of a conserved hairpin near the 3'-end of 16S rRNA in the 30S particle. May play a critical role in biogenesis of 30S subunits. The protein is Ribosomal RNA small subunit methyltransferase A of Maricaulis maris (strain MCS10) (Caulobacter maris).